Consider the following 970-residue polypeptide: Sodium/calcium exchanger 1 (970 aa).

An N-terminal signal peptide occupies residues 1–32; that stretch reads MLQLRLLPTFSMGCHLLAVVALLFSHVDLISA. Over 33-71 the chain is Extracellular; that stretch reads ETEMEGEGNETGECTGSYYCKKGVILPIWEPQDPSFGDK. An N-linked (GlcNAc...) asparagine glycan is attached at Asn41. A helical transmembrane segment spans residues 72 to 92; it reads IARATVYFVAMVYMFLGVSII. Residues 93–133 lie on the Cytoplasmic side of the membrane; sequence ADRFMSSIEVITSQEKEITIKKPNGETTKTTVRIWNETVSN. The chain crosses the membrane as a helical span at residues 134–154; the sequence is LTLMALGSSAPEILLSVIEVC. The Alpha-1 repeat unit spans residues 138 to 178; it reads ALGSSAPEILLSVIEVCGHNFTAGDLGPSTIVGSAAFNMFI. The Extracellular portion of the chain corresponds to 155–167; sequence GHNFTAGDLGPST. Asn157 is a glycosylation site (N-linked (GlcNAc...) asparagine). Residues 168-188 form a helical membrane-spanning segment; the sequence is IVGSAAFNMFIIIALCVYVVP. Residues 189–201 are Cytoplasmic-facing; it reads DGETRKIKHLRVF. Residues 202–222 traverse the membrane as a helical segment; that stretch reads FVTAAWSIFAYTWLYIILSVI. The Extracellular portion of the chain corresponds to 223-228; it reads SPGVVE. Residues 229–249 traverse the membrane as a helical segment; that stretch reads VWEGLLTFFFFPICVVFAWVA. The Cytoplasmic portion of the chain corresponds to 250 to 797; the sequence is DRRLLFYKYV…FVPPTEYWNG (548 aa). The segment at 251-270 is putative calmodulin-binding region; it reads RRLLFYKYVYKRYRAGKQRG. Ser282 and Ser389 each carry phosphoserine. Calx-beta domains follow at residues 393 to 493 and 524 to 624; these read VNTE…VHLS and ATVT…LEIG. Positions 417, 453, 478, 479, 481, 483, 486, 530, 531, 532, 548, 584, 610, 611, 612, and 715 each coordinate Ca(2+). Residues 798 to 818 traverse the membrane as a helical segment; sequence WACFIVSILMIGILTAFIGDL. Residues 819 to 821 lie on the Extracellular side of the membrane; it reads ASH. The chain crosses the membrane as a helical span at residues 822–842; the sequence is FGCTIGLKDSVTAVVFVALGT. The Alpha-2 repeat unit spans residues 839–875; sequence ALGTSVPDTFASKVAATQDQYADASIGNVTGSNAVNV. The Cytoplasmic portion of the chain corresponds to 843–871; the sequence is SVPDTFASKVAATQDQYADASIGNVTGSN. Residues 872 to 892 form a helical membrane-spanning segment; it reads AVNVFLGIGVAWSIAAIYHAA. Residues 893-903 lie on the Extracellular side of the membrane; it reads NGEQFKVSPGT. The chain crosses the membrane as a helical span at residues 904–924; the sequence is LAFSVTLFTIFAFINVGVLLY. At 925–941 the chain is on the cytoplasmic side; the sequence is RRRPEIGGELGGPRTAK. The helical transmembrane segment at 942–962 threads the bilayer; it reads LLTSCLFVLLWLLYIFFSSLE. At 963-970 the chain is on the extracellular side; it reads AYCHIKGF.

This sequence belongs to the Ca(2+):cation antiporter (CaCA) (TC 2.A.19) family. SLC8 subfamily. As to expression, cardiac sarcolemma (at protein level).

Its subcellular location is the cell membrane. The protein localises to the sarcolemma. The enzyme catalyses Ca(2+)(in) + 3 Na(+)(out) = Ca(2+)(out) + 3 Na(+)(in). Activated by micromolar levels of Ca(2+). In the absence of regulatory Ca(2+), channels open rapidly, and then inactivate rapidly. Inactivation is enhanced by Na(+) and is inhibited by micromolar levels of Ca(2+). Its function is as follows. Mediates the exchange of one Ca(2+) ion against three to four Na(+) ions across the cell membrane, and thereby contributes to the regulation of cytoplasmic Ca(2+) levels and Ca(2+)-dependent cellular processes. Contributes to Ca(2+) transport during excitation-contraction coupling in muscle. In a first phase, voltage-gated channels mediate the rapid increase of cytoplasmic Ca(2+) levels due to release of Ca(2+) stores from the endoplasmic reticulum. SLC8A1 mediates the export of Ca(2+) from the cell during the next phase, so that cytoplasmic Ca(2+) levels rapidly return to baseline. Required for normal embryonic heart development and the onset of heart contractions. The sequence is that of Sodium/calcium exchanger 1 (SLC8A1) from Canis lupus familiaris (Dog).